A 140-amino-acid chain; its full sequence is Anti-sigma F factor (140 aa).

It belongs to the anti-sigma-factor family.

The catalysed reaction is L-seryl-[protein] + ATP = O-phospho-L-seryl-[protein] + ADP + H(+). The enzyme catalyses L-threonyl-[protein] + ATP = O-phospho-L-threonyl-[protein] + ADP + H(+). In terms of biological role, binds to sigma F and blocks its ability to form an RNA polymerase holoenzyme (E-sigma F). Phosphorylates SpoIIAA on a serine residue. This phosphorylation may enable SpoIIAA to act as an anti-anti-sigma factor that counteracts SpoIIAB and thus releases sigma F from inhibition. The chain is Anti-sigma F factor from Clostridium perfringens (strain ATCC 13124 / DSM 756 / JCM 1290 / NCIMB 6125 / NCTC 8237 / Type A).